Reading from the N-terminus, the 504-residue chain is Amidophosphoribosyltransferase (504 aa).

Residue Cys2 is the Nucleophile of the active site. One can recognise a Glutamine amidotransferase type-2 domain in the interval 2–235; it reads CGIVGIVSQS…PGEAIYVTFE (234 aa). Mg(2+) is bound by residues Thr305, Asp367, and Asp368.

This sequence in the C-terminal section; belongs to the purine/pyrimidine phosphoribosyltransferase family. The cofactor is Mg(2+).

The enzyme catalyses 5-phospho-beta-D-ribosylamine + L-glutamate + diphosphate = 5-phospho-alpha-D-ribose 1-diphosphate + L-glutamine + H2O. Its pathway is purine metabolism; IMP biosynthesis via de novo pathway; N(1)-(5-phospho-D-ribosyl)glycinamide from 5-phospho-alpha-D-ribose 1-diphosphate: step 1/2. Functionally, catalyzes the formation of phosphoribosylamine from phosphoribosylpyrophosphate (PRPP) and glutamine. The sequence is that of Amidophosphoribosyltransferase from Pasteurella multocida (strain Pm70).